The chain runs to 154 residues: Protein X (154 aa).

The interval 68–117 (PCALRFTSARRMETTVNANQVLPKVLHKRTLGLSALSTTDLEAYFKDCVF) is mitochondrial targeting sequence.

It belongs to the orthohepadnavirus protein X family. As to quaternary structure, may form homodimer. May interact with host CEBPA, CFLAR, CREB1, DDB1, E4F1, HBXIP, HSPD1/HSP60, NFKBIA, POLR2E and SMAD4. Interacts with host SMC5-SMC6 complex and induces its degradation. Interacts with host TRPC4AP; leading to prevent ubiquitination of TRPC4AP. Interacts with host PLSCR1; this interaction promotes ubiquitination and degradation of HBx and impairs HBx-mediated cell proliferation. In terms of processing, a fraction may be phosphorylated in insect cells and HepG2 cells, a human hepatoblastoma cell line. Phosphorylated in vitro by host protein kinase C or mitogen-activated protein kinase. N-acetylated in insect cells.

Its subcellular location is the host cytoplasm. It localises to the host nucleus. The protein localises to the host mitochondrion. Its function is as follows. Multifunctional protein that plays a role in silencing host antiviral defenses and promoting viral transcription. Does not seem to be essential for HBV infection. May be directly involved in development of cirrhosis and liver cancer (hepatocellular carcinoma). Most of cytosolic activities involve modulation of cytosolic calcium. The effect on apoptosis is controversial depending on the cell types in which the studies have been conducted. May induce apoptosis by localizing in mitochondria and causing loss of mitochondrial membrane potential. May also modulate apoptosis by binding host CFLAR, a key regulator of the death-inducing signaling complex (DISC). Promotes viral transcription by using the host E3 ubiquitin ligase DDB1 to target the SMC5-SMC6 complex to proteasomal degradation. This host complex would otherwise bind to viral episomal DNA, and prevents its transcription. Moderately stimulates transcription of many different viral and cellular transcription elements. Promoters and enhancers stimulated by HBx contain DNA binding sites for NF-kappa-B, AP-1, AP-2, c-EBP, ATF/CREB, or the calcium-activated factor NF-AT. The protein is Protein X of Homo sapiens (Human).